The following is a 236-amino-acid chain: uncharacterized protein (236 aa).

The NADP(+) site is built by Asp-22, Asn-49, and Lys-82. Residues Ser-100 and Tyr-114 each act as proton donor in the active site. Residues Tyr-114 and Lys-118 each contribute to the NADP(+) site. Lys-118 serves as the catalytic Lowers pKa of active site Tyr.

Belongs to the short-chain dehydrogenases/reductases (SDR) family.

It is found in the cytoplasm. It localises to the nucleus. This is an uncharacterized protein from Schizosaccharomyces pombe (strain 972 / ATCC 24843) (Fission yeast).